Reading from the N-terminus, the 116-residue chain is Ribonuclease P protein component 2 (116 aa).

Belongs to the eukaryotic/archaeal RNase P protein component 2 family. Consists of a catalytic RNA component and at least 4-5 protein subunits.

The protein localises to the cytoplasm. It carries out the reaction Endonucleolytic cleavage of RNA, removing 5'-extranucleotides from tRNA precursor.. In terms of biological role, part of ribonuclease P, a protein complex that generates mature tRNA molecules by cleaving their 5'-ends. The sequence is that of Ribonuclease P protein component 2 from Methanosarcina mazei (strain ATCC BAA-159 / DSM 3647 / Goe1 / Go1 / JCM 11833 / OCM 88) (Methanosarcina frisia).